A 100-amino-acid polypeptide reads, in one-letter code: Urease subunit gamma (100 aa).

The protein belongs to the urease gamma subunit family. In terms of assembly, heterotrimer of UreA (gamma), UreB (beta) and UreC (alpha) subunits. Three heterotrimers associate to form the active enzyme.

The protein resides in the cytoplasm. The catalysed reaction is urea + 2 H2O + H(+) = hydrogencarbonate + 2 NH4(+). Its pathway is nitrogen metabolism; urea degradation; CO(2) and NH(3) from urea (urease route): step 1/1. The sequence is that of Urease subunit gamma from Marinobacter nauticus (strain ATCC 700491 / DSM 11845 / VT8) (Marinobacter aquaeolei).